The chain runs to 455 residues: Angiopoietin-related protein 3 (455 aa).

Positions 1–16 (MHTIKLFLFVVPLVIA) are cleaved as a signal peptide. Positions 17 to 165 (SRVDPDLSSF…QEHPEVTSLK (149 aa)) are sufficient to inhibit LPL lipase activity. Positions 17-207 (SRVDPDLSSF…EIEKQLRKTG (191 aa)) are sufficient to inhibit LIPG/EL phospholipase activity. Residues 32 to 56 (EPKSRFAMLDDVKILANGLLQLGHG) are required for inhibition of LPL lipase activity. A coiled-coil region spans residues 85–206 (LSLRTNEIKE…KEIEKQLRKT (122 aa)). An N-linked (GlcNAc...) asparagine glycan is attached at asparagine 115. Residues 202-242 (QLRKTGIQEPSENSLSSKSRAPRTTPPLQLNETENTEQDDL) are disordered. A compositionally biased stretch (polar residues) spans 209 to 220 (QEPSENSLSSKS). A glycan (O-linked (GlcNAc) threonine) is linked at threonine 226. Asparagine 232 is a glycosylation site (N-linked (GlcNAc...) asparagine). The Fibrinogen C-terminal domain occupies 237–455 (TEQDDLPADC…SSKMMLQPTT (219 aa)). Cysteine 246 and cysteine 274 are oxidised to a cystine. N-linked (GlcNAc...) asparagine glycans are attached at residues asparagine 296 and asparagine 357. Cysteine 394 and cysteine 408 are disulfide-bonded.

In terms of assembly, interacts with ANGPTL8. Interacts with ITGB3. Post-translationally, in part proteolytically cleaved by proprotein convertases; proposed to be involved in activation. In primary hepatocytes is intracellularily predominantly processed by FURIN and extracellularily by FURIN and PCSK6/PACE4. In 18.5 dpc embryos 75% of protein is found to be processed compared to 25 % in adults. In terms of tissue distribution, predominantly expressed in liver, weakly expressed in kidney and lung. Expressed in podocytes (at protein level). Expressed in hypothalamic neurons (at protein level). Expressed in bone marrow sinusoidal endothelial cells (at protein level).

It localises to the secreted. Its subcellular location is the cell projection. It is found in the lamellipodium. Functionally, acts in part as a hepatokine that is involved in regulation of lipid and glucose metabolism. Proposed to play a role in the trafficking of energy substrates to either storage or oxidative tissues in response to food intake. Has a stimulatory effect on plasma triglycerides (TG), which is achieved by suppressing plasma TG clearance via inhibition of LPL activity; the function seems to be specific for the feeding conditions. The inhibition of LPL activity appears to be an indirect mechanism involving recruitment of proprotein convertases PCSK6 and FURIN to LPL leading to cleavage and dissociation of LPL from the cell surface; the function does not require ANGPTL3 proteolytic cleavage but seems to be mediated by the N-terminal domain, and is not inhibited by GPIHBP1. Can inhibit endothelial lipase, causing increased plasma levels of high density lipoprotein (HDL) cholesterol and phospholipids; the cleaved N-terminal domain is more efficient than the uncleaved proprotein. Can bind to adipocytes to activate lipolysis, releasing free fatty acids and glycerol. Suppresses LPL specifically in oxidative tissues which is required to route very low density lipoprotein (VLDL)-TG to white adipose tissue (WAT) for storage in response to food; the function may involve cooperation with circulating, liver-derived ANGPTL8 and ANGPTL4 expression in WAT. Contributes to lower plasma levels of low density lipoprotein (LDL)-cholesterol by a mechanism that is independent of the canonical pathway implicating APOE and LDLR. May stimulate hypothalamic LPL activity. Involved in angiogenesis. Binds to endothelial cells via integrin alpha-V/beta-3 (ITGAV:ITGB3), activates FAK, MAPK and Akt signaling pathways and induces cell adhesion and cell migration. May increase the motility of podocytes. Secreted from podocytes, may modulate properties of glomerular endothelial cells involving integrin alpha-V/beta-3 and Akt signaling. May induce actin filament rearrangements in podocytes implicating integrin alpha-V/beta-3 and Rac1 activation. Binds to hematopoietic stem cells (HSC) and is involved in the regulation of HSC activity probably implicating down-regulation of IKZF1/IKAROS. The polypeptide is Angiopoietin-related protein 3 (Angptl3) (Mus musculus (Mouse)).